The sequence spans 605 residues: Elongation factor 4 (605 aa).

Positions 9–192 constitute a tr-type G domain; it reads CRIRNFCIIA…SIVHRIPPPA (184 aa). Residues 21 to 26 and 139 to 142 contribute to the GTP site; these read DHGKST and NKID.

Belongs to the TRAFAC class translation factor GTPase superfamily. Classic translation factor GTPase family. LepA subfamily.

The protein resides in the cell inner membrane. The catalysed reaction is GTP + H2O = GDP + phosphate + H(+). Its function is as follows. Required for accurate and efficient protein synthesis under certain stress conditions. May act as a fidelity factor of the translation reaction, by catalyzing a one-codon backward translocation of tRNAs on improperly translocated ribosomes. Back-translocation proceeds from a post-translocation (POST) complex to a pre-translocation (PRE) complex, thus giving elongation factor G a second chance to translocate the tRNAs correctly. Binds to ribosomes in a GTP-dependent manner. The protein is Elongation factor 4 of Chlorobium chlorochromatii (strain CaD3).